Here is a 157-residue protein sequence, read N- to C-terminus: 6,7-dimethyl-8-ribityllumazine synthase (157 aa).

5-amino-6-(D-ribitylamino)uracil is bound by residues phenylalanine 23, 57–59 (AFE), and 81–83 (AVI). 86–87 (ST) contacts (2S)-2-hydroxy-3-oxobutyl phosphate. Histidine 89 functions as the Proton donor in the catalytic mechanism. Position 114 (phenylalanine 114) interacts with 5-amino-6-(D-ribitylamino)uracil. Arginine 128 contacts (2S)-2-hydroxy-3-oxobutyl phosphate.

It belongs to the DMRL synthase family.

The catalysed reaction is (2S)-2-hydroxy-3-oxobutyl phosphate + 5-amino-6-(D-ribitylamino)uracil = 6,7-dimethyl-8-(1-D-ribityl)lumazine + phosphate + 2 H2O + H(+). It participates in cofactor biosynthesis; riboflavin biosynthesis; riboflavin from 2-hydroxy-3-oxobutyl phosphate and 5-amino-6-(D-ribitylamino)uracil: step 1/2. Its function is as follows. Catalyzes the formation of 6,7-dimethyl-8-ribityllumazine by condensation of 5-amino-6-(D-ribitylamino)uracil with 3,4-dihydroxy-2-butanone 4-phosphate. This is the penultimate step in the biosynthesis of riboflavin. The polypeptide is 6,7-dimethyl-8-ribityllumazine synthase (Desulfosudis oleivorans (strain DSM 6200 / JCM 39069 / Hxd3) (Desulfococcus oleovorans)).